The sequence spans 158 residues: Cystin-1 (158 aa).

Residues 1 to 146 (MGSGSSRSSR…AAISYDHSEE (146 aa)) form a disordered region. Gly2 is lipidated: N-myristoyl glycine. Low complexity-rich tracts occupy residues 19 to 32 (ESLP…ALEG) and 39 to 52 (PVAA…AAEE). A Ciliary targeting motif motif is present at residues 29 to 33 (ALEGG). Basic and acidic residues predominate over residues 65–75 (DGRDETLRLLD).

In terms of assembly, interacts (when myristoylated) with UNC119 and UNC119B; interaction is required for localization to cilium. As to expression, expressed at high levels in the kidney and pancreas. Moderate expression seen in the skeletal muscle, liver and heart. A weak expression seen in the brain, lung, uterus, prostate, testis, small intestine and colon.

The protein localises to the cell projection. It is found in the cilium membrane. It localises to the cytoplasm. The protein resides in the cytoskeleton. Its subcellular location is the cilium axoneme. The protein is Cystin-1 (CYS1) of Homo sapiens (Human).